The chain runs to 701 residues: Elongation factor G (701 aa).

In terms of domain architecture, tr-type G spans 8 to 291; it reads SRYRNIGIVA…AVIDYLPAPV (284 aa). GTP is bound by residues 17–24, 89–93, and 143–146; these read AHVDAGKT, DTPGH, and NKMD.

It belongs to the TRAFAC class translation factor GTPase superfamily. Classic translation factor GTPase family. EF-G/EF-2 subfamily.

The protein localises to the cytoplasm. In terms of biological role, catalyzes the GTP-dependent ribosomal translocation step during translation elongation. During this step, the ribosome changes from the pre-translocational (PRE) to the post-translocational (POST) state as the newly formed A-site-bound peptidyl-tRNA and P-site-bound deacylated tRNA move to the P and E sites, respectively. Catalyzes the coordinated movement of the two tRNA molecules, the mRNA and conformational changes in the ribosome. In Pseudomonas fluorescens (strain SBW25), this protein is Elongation factor G.